The following is a 947-amino-acid chain: Leucine-rich repeat-containing protein 37B (947 aa).

An N-terminal signal peptide occupies residues 1–27 (MSWLRFWGPWPLLTWQLLSLLVKEAQP). Topologically, residues 28–905 (LVWVKDPLQL…EVPGDDYKNK (878 aa)) are extracellular. 4 disordered regions span residues 42–88 (LGPP…ALPQ), 226–257 (YLSMDTLYPGSLPPELRVNADEPPGPPEQVGL), 294–458 (EVEP…PEPT), and 484–514 (SLTEVTGPPTKLESSQDSLVQSETAPEEQKA). A compositionally biased stretch (polar residues) spans 311-320 (SMESLAQTPL). N-linked (GlcNAc...) asparagine glycosylation occurs at N358. Composition is skewed to polar residues over residues 404-415 (GQAQHSHLTEAT), 436-445 (SPTTEETSAQ), and 495-507 (LESSQDSLVQSET). LRR repeat units follow at residues 556-577 (IFTTLNFQGNYISYLDGNVWKA), 580-601 (WTEKLILSENYLTELPKDSFEG), 604-625 (YLQYLDLSCNKIRYIERQTFES), 628-649 (FLQYINLGCNLITKLSLGTFQA), 655-676 (FLHNLILNRNPLTTVEDPYLFE), and 679-699 (ALKYLDMGTTHITLTTLKNIL). Residue N789 is glycosylated (N-linked (GlcNAc...) asparagine). Residues 867 to 897 (DTDQQKTNYINENMEQNEQKEQKSSELMKEV) are a coiled coil. Residues 906–926 (LIFAISVTVILIILIIIFCLI) traverse the membrane as a helical segment. The Cytoplasmic portion of the chain corresponds to 927-947 (EVNSHKRASEKYKDNPSISGA).

The protein localises to the membrane. This is Leucine-rich repeat-containing protein 37B (LRRC37B) from Homo sapiens (Human).